The sequence spans 192 residues: UPF0149 protein KPK_0755 (192 aa).

It belongs to the UPF0149 family.

The chain is UPF0149 protein KPK_0755 from Klebsiella pneumoniae (strain 342).